The chain runs to 1201 residues: Zinc finger protein sdc-1 (1201 aa).

7 consecutive C2H2-type zinc fingers follow at residues 117 to 139 (LTCA…RGVH), 145 to 168 (YMCQ…RTSC), 233 to 254 (SSCH…GNVH), 268 to 290 (YFCH…WRLH), 486 to 513 (IVCH…LLRH), 521 to 543 (YHCA…INDC), and 652 to 674 (VVCF…DYCH). Residues 1164-1201 (KRRNSETREHELIELDTDDLNEPSTSDGRYSFGHHGYR) are disordered. A compositionally biased stretch (basic and acidic residues) spans 1167-1176 (NSETREHELI).

As to quaternary structure, component of the SDC complex, which consists of sdc-1, sdc-2 and sdc-3. Within the complex, interacts with sdc-2 and sdc-3.

It is found in the nucleus. Its subcellular location is the chromosome. Embryonic transcription factor regulating downstream genes involved specifically in the sex determination and dosage compensation pathways, or regulating other genes involved in the coordinate control of both processes. Component of the SDC complex that functions in sex determination and in X chromosome dosage compensation specifically in hermaphrodite (XX) animals. Involved in the recruitment of the condensin I-like dosage compensation complex to the male sex-determining autosomal gene her-1, thereby contributing to its repression and initiating hermaphrodite sexual development. Similarly, might contribute to X-linked gene repression through recruitment of the dosage compensation complex to the X chromosomes in hermaphrodites. Seems to be involved in the depletion of histone H4 lysine 16 acetylation (H4K16ac) on dosage compensated X chromosomes. Plays a role in developmental rate and body fat regulation downstream of the TOR complex 2 pathway. This is Zinc finger protein sdc-1 (sdc-1) from Caenorhabditis elegans.